We begin with the raw amino-acid sequence, 275 residues long: Dermonecrotic toxin LamSicTox-alphaIV1i (275 aa).

Residue histidine 5 is part of the active site. Mg(2+)-binding residues include glutamate 25 and aspartate 27. The active-site Nucleophile is the histidine 41. 2 disulfide bridges follow: cysteine 45–cysteine 51 and cysteine 47–cysteine 192. Aspartate 85 provides a ligand contact to Mg(2+).

This sequence belongs to the arthropod phospholipase D family. Class II subfamily. Mg(2+) is required as a cofactor. As to expression, expressed by the venom gland.

The protein resides in the secreted. It catalyses the reaction an N-(acyl)-sphingosylphosphocholine = an N-(acyl)-sphingosyl-1,3-cyclic phosphate + choline. The catalysed reaction is an N-(acyl)-sphingosylphosphoethanolamine = an N-(acyl)-sphingosyl-1,3-cyclic phosphate + ethanolamine. The enzyme catalyses a 1-acyl-sn-glycero-3-phosphocholine = a 1-acyl-sn-glycero-2,3-cyclic phosphate + choline. It carries out the reaction a 1-acyl-sn-glycero-3-phosphoethanolamine = a 1-acyl-sn-glycero-2,3-cyclic phosphate + ethanolamine. Its function is as follows. Dermonecrotic toxins cleave the phosphodiester linkage between the phosphate and headgroup of certain phospholipids (sphingolipid and lysolipid substrates), forming an alcohol (often choline) and a cyclic phosphate. This toxin acts on sphingomyelin (SM). It may also act on ceramide phosphoethanolamine (CPE), lysophosphatidylcholine (LPC) and lysophosphatidylethanolamine (LPE), but not on lysophosphatidylserine (LPS), and lysophosphatidylglycerol (LPG). It acts by transphosphatidylation, releasing exclusively cyclic phosphate products as second products. Induces dermonecrosis, hemolysis, increased vascular permeability, edema, inflammatory response, and platelet aggregation. In Loxosceles amazonica (Recluse spider), this protein is Dermonecrotic toxin LamSicTox-alphaIV1i.